The following is an 88-amino-acid chain: Small ribosomal subunit protein uS17 (88 aa).

It belongs to the universal ribosomal protein uS17 family. As to quaternary structure, part of the 30S ribosomal subunit.

One of the primary rRNA binding proteins, it binds specifically to the 5'-end of 16S ribosomal RNA. The chain is Small ribosomal subunit protein uS17 from Saccharophagus degradans (strain 2-40 / ATCC 43961 / DSM 17024).